A 251-amino-acid polypeptide reads, in one-letter code: Triosephosphate isomerase (251 aa).

A substrate-binding site is contributed by 9–11 (NWK). The active-site Electrophile is the His-96. Glu-168 acts as the Proton acceptor in catalysis. Residues Gly-174, Ser-214, and 235-236 (GG) contribute to the substrate site.

This sequence belongs to the triosephosphate isomerase family. As to quaternary structure, homodimer.

Its subcellular location is the cytoplasm. The enzyme catalyses D-glyceraldehyde 3-phosphate = dihydroxyacetone phosphate. Its pathway is carbohydrate biosynthesis; gluconeogenesis. It functions in the pathway carbohydrate degradation; glycolysis; D-glyceraldehyde 3-phosphate from glycerone phosphate: step 1/1. Its function is as follows. Involved in the gluconeogenesis. Catalyzes stereospecifically the conversion of dihydroxyacetone phosphate (DHAP) to D-glyceraldehyde-3-phosphate (G3P). The polypeptide is Triosephosphate isomerase (Porphyromonas gingivalis (strain ATCC BAA-308 / W83)).